The chain runs to 348 residues: MHSFEISIPDSGLETALQNKIDRKTKPLGALGLLEKTAKKIGLVQQTLTPQLNNPQMLVFAGDHGAAKAGVSAYPQDVTWQMVENFLAGGAAINVFARQNGLGLSVVDAGVAHDFGQRTGLIDAKVAAGTANYIEQAAMTPAQCAQAIQNGAAIVRQLAAKGCNVVGFGEMGIGNTASASLLTHCLTGLPLAECVGRGTGLDDAGLARKQDLLEQALIRYRNAGGNNDAGAVLAEFGGFEIATMVGAMLAAAEAKMVLLIDGFIVGSAALIASRLAPALLDYCVFCHRSAEAGHRTQLLAMGAEPLLDLGLRLGEGTGAALAYPLVQSAVSFLNEMASFESAGVSDKE.

Glu315 functions as the Proton acceptor in the catalytic mechanism.

Belongs to the CobT family.

The catalysed reaction is 5,6-dimethylbenzimidazole + nicotinate beta-D-ribonucleotide = alpha-ribazole 5'-phosphate + nicotinate + H(+). It participates in nucleoside biosynthesis; alpha-ribazole biosynthesis; alpha-ribazole from 5,6-dimethylbenzimidazole: step 1/2. Its function is as follows. Catalyzes the synthesis of alpha-ribazole-5'-phosphate from nicotinate mononucleotide (NAMN) and 5,6-dimethylbenzimidazole (DMB). This is Nicotinate-nucleotide--dimethylbenzimidazole phosphoribosyltransferase from Dechloromonas aromatica (strain RCB).